The primary structure comprises 229 residues: RNA pyrophosphohydrolase (229 aa).

A Nudix hydrolase domain is found at 6 to 149 (GFRPNVGIIL…KRGVYEMALT (144 aa)). Residues 38 to 59 (GGIDRGETPEQAMFRELHEEVG) carry the Nudix box motif. Residues 191 to 229 (KPGMELPPGASFDPDPQNSVPAPLEALPTLPVPKKPLDA) are disordered. Residues 220–229 (LPVPKKPLDA) show a composition bias toward pro residues.

It belongs to the Nudix hydrolase family. RppH subfamily. A divalent metal cation serves as cofactor.

Functionally, accelerates the degradation of transcripts by removing pyrophosphate from the 5'-end of triphosphorylated RNA, leading to a more labile monophosphorylated state that can stimulate subsequent ribonuclease cleavage. This is RNA pyrophosphohydrolase from Acidovorax ebreus (strain TPSY) (Diaphorobacter sp. (strain TPSY)).